Here is an 870-residue protein sequence, read N- to C-terminus: Aldehyde-alcohol dehydrogenase 2 (870 aa).

Residue C252 is part of the active site. G431–G436 provides a ligand contact to NAD(+).

The protein in the N-terminal section; belongs to the aldehyde dehydrogenase family. In the C-terminal section; belongs to the iron-containing alcohol dehydrogenase family. In terms of assembly, seems to form a rod shaped homomer composed of at least 20 identical subunits. Zn(2+) serves as cofactor. Requires Fe(2+) as cofactor.

It carries out the reaction a primary alcohol + NAD(+) = an aldehyde + NADH + H(+). The catalysed reaction is a secondary alcohol + NAD(+) = a ketone + NADH + H(+). It catalyses the reaction acetaldehyde + NAD(+) + CoA = acetyl-CoA + NADH + H(+). In terms of biological role, this enzyme has two NAD(+)-dependent activities: ADH and ACDH. May be a critical enzyme in the fermentative pathway. The sequence is that of Aldehyde-alcohol dehydrogenase 2 (ADH2) from Entamoeba histolytica (strain ATCC 30459 / HM-1:IMSS / ABRM).